A 51-amino-acid chain; its full sequence is Large ribosomal subunit protein bL32c (51 aa).

Belongs to the bacterial ribosomal protein bL32 family.

The protein resides in the plastid. Its subcellular location is the chloroplast. The chain is Large ribosomal subunit protein bL32c from Oenothera elata subsp. hookeri (Hooker's evening primrose).